The following is a 596-amino-acid chain: Membrane protein insertase YidC (596 aa).

The next 6 membrane-spanning stretches (helical) occupy residues 4–24 (NKLI…HFFD), 332–352 (LGWP…FSFI), 359–379 (YGLV…PLSY), 425–445 (LSGC…FNFF), 468–488 (IINL…FTLL), and 518–538 (PITF…YYFV). Over residues 565–584 (KNKEKSANNKEGSFKKRFQD) the composition is skewed to basic and acidic residues. The disordered stretch occupies residues 565–596 (KNKEKSANNKEGSFKKRFQDAIKASASHKGKK).

Belongs to the OXA1/ALB3/YidC family. Type 1 subfamily. As to quaternary structure, interacts with the Sec translocase complex via SecD. Specifically interacts with transmembrane segments of nascent integral membrane proteins during membrane integration.

Its subcellular location is the cell inner membrane. Functionally, required for the insertion and/or proper folding and/or complex formation of integral membrane proteins into the membrane. Involved in integration of membrane proteins that insert both dependently and independently of the Sec translocase complex, as well as at least some lipoproteins. Aids folding of multispanning membrane proteins. This Amoebophilus asiaticus (strain 5a2) protein is Membrane protein insertase YidC.